Consider the following 238-residue polypeptide: Splicing regulator RBM11 (238 aa).

In terms of domain architecture, RRM spans 10-87 (RTVFVGNLEA…RPINVQYRFG (78 aa)). The interval 172–238 (ALNHSPGPEA…CRKCKKKKRY (67 aa)) is disordered. Residues 202–237 (NKRKRQRPDSDSDSSSEDKRGNEGSQKCRKCKKKKR) carry the Bipartite nuclear localization signal motif. Over residues 228 to 238 (KCRKCKKKKRY) the composition is skewed to basic residues.

As to quaternary structure, homodimer. Selectively expressed in brain, cerebellum and testis, and to a lower extent in kidney.

It is found in the nucleus. The protein resides in the nucleoplasm. It localises to the nucleus speckle. Its function is as follows. Tissue-specific splicing factor with potential implication in the regulation of alternative splicing during neuron and germ cell differentiation. Antagonizes SRSF1-mediated BCL-X splicing. May affect the choice of alternative 5' splice sites by binding to specific sequences in exons and antagonizing the SR protein SRSF1. The polypeptide is Splicing regulator RBM11 (Rbm11) (Mus musculus (Mouse)).